The primary structure comprises 860 residues: Leucine--tRNA ligase (860 aa).

Residues 42 to 52 (PYPSGRLHMGH) carry the 'HIGH' region motif. Positions 619–623 (KMSKS) match the 'KMSKS' region motif. Lysine 622 provides a ligand contact to ATP.

The protein belongs to the class-I aminoacyl-tRNA synthetase family.

It is found in the cytoplasm. The enzyme catalyses tRNA(Leu) + L-leucine + ATP = L-leucyl-tRNA(Leu) + AMP + diphosphate. This Shigella boydii serotype 18 (strain CDC 3083-94 / BS512) protein is Leucine--tRNA ligase.